The sequence spans 537 residues: Bifunctional purine biosynthesis protein PurH (537 aa).

Residues 8-158 (IPAPDLVPVR…KNHAYVAVVT (151 aa)) enclose the MGS-like domain.

It belongs to the PurH family.

It catalyses the reaction (6R)-10-formyltetrahydrofolate + 5-amino-1-(5-phospho-beta-D-ribosyl)imidazole-4-carboxamide = 5-formamido-1-(5-phospho-D-ribosyl)imidazole-4-carboxamide + (6S)-5,6,7,8-tetrahydrofolate. It carries out the reaction IMP + H2O = 5-formamido-1-(5-phospho-D-ribosyl)imidazole-4-carboxamide. It functions in the pathway purine metabolism; IMP biosynthesis via de novo pathway; 5-formamido-1-(5-phospho-D-ribosyl)imidazole-4-carboxamide from 5-amino-1-(5-phospho-D-ribosyl)imidazole-4-carboxamide (10-formyl THF route): step 1/1. The protein operates within purine metabolism; IMP biosynthesis via de novo pathway; IMP from 5-formamido-1-(5-phospho-D-ribosyl)imidazole-4-carboxamide: step 1/1. The polypeptide is Bifunctional purine biosynthesis protein PurH (Chelativorans sp. (strain BNC1)).